The sequence spans 664 residues: MSPVEPAGIMKKSHRQKSQRLWAKLVMRKWLNISGRDPEYGADTDNESENEDAREDNDDSSSDEEGGSGSRGRESKVYENAEDAIAAASAVVDAAAAAAEFISNDAPMKLRRRNSETLRAQYINNKEIRVCVGTWNVGGISPPSDLDIDDWIEINQPADIYVLGLQEIVPLNAGNILGAEDDRPVAKWEEVIREALNRVRPKLSGVKSYSDPPSPGRFKPFEETHDIIEEEVAFESDSDAGVEIHPIDEEEEEETDRLWALKHDGGVIGEVKTLVDPNTGLPVVEIKRQFSIPKKLDRQLCLRADSFKGISDDDSTQTGMKTINRMLSGKERIGLSWPEPPLNMLGPCVLDRQPSIKTVKSLKTAKSFKAYSSFKSVAGNNNGIPPEVLALAEMDLKLLMERKRRPAYVRLVSKQMVGILLTIWVKRSLRKHIQNVRVSTVGVGVMGYIGNKGAVSVSMSINQTFFCFINTHLTAGEREVDQIKRNADVHEIHKRTVFHSVSALGLPKLIYDHERIIWLGDLNYRLSSSYEKTRDLISKREWSKLLEYDQLVKEYRKGRAFDGWSEGTLHFPPTYKYQANSDEYTANDGKAPKRTPAWCDRVLSYGKGMRLVHYRRTEQKFSDHRPVTAIYMAEVEVFSARKLQRALTFTDAEIEDEGLVAVLV.

Residues 35–76 (GRDPEYGADTDNESENEDAREDNDDSSSDEEGGSGSRGRESK) form a disordered region. Positions 40–66 (YGADTDNESENEDAREDNDDSSSDEEG) are enriched in acidic residues. Catalytic stretches follow at residues 514-529 (ERII…LSSS) and 592-607 (PKRT…SYGK).

It belongs to the inositol polyphosphate 5-phosphatase family.

The enzyme catalyses a 1,2-diacyl-sn-glycero-3-phospho-(1D-myo-inositol-4,5-bisphosphate) + H2O = a 1,2-diacyl-sn-glycero-3-phospho-(1D-myo-inositol 4-phosphate) + phosphate. It catalyses the reaction a 1,2-diacyl-sn-glycero-3-phospho-(1D-myo-inositol-3,4,5-trisphosphate) + H2O = a 1,2-diacyl-sn-glycero-3-phospho-(1D-myo-inositol-3,4-bisphosphate) + phosphate. Its function is as follows. Has phosphatase activity toward PtdIns(4,5)P2 and PtdIns(3,4,5)P3. The chain is Type IV inositol polyphosphate 5-phosphatase 3 from Arabidopsis thaliana (Mouse-ear cress).